We begin with the raw amino-acid sequence, 235 residues long: Claudin-16 (235 aa).

The Cytoplasmic segment spans residues 1–3; the sequence is MKD. A helical transmembrane segment spans residues 4 to 24; sequence LLQYAACFLAIFSTGFLIVAT. Over 25 to 79 the chain is Extracellular; sequence WTDCWMVNADDSLEVSTKCRGLWWECVTNAFDGIRTCDEYDSIYAEHPLKLVVTR. A helical membrane pass occupies residues 80–100; that stretch reads ALMITADILAGFGFITLLLGL. The Cytoplasmic segment spans residues 101–115; that stretch reads DCVKFLPDDPQIKVR. Residues 116–136 form a helical membrane-spanning segment; the sequence is LCFVAGTTLLIAGTPGIIGSV. Residues 137–169 lie on the Extracellular side of the membrane; it reads WYAVDVYVERSSLVLHNIFLGIQYKFGWSCWLG. The chain crosses the membrane as a helical span at residues 170–190; sequence MAGSLGCFLAGALLTCCLYLF. Topologically, residues 191–235 are cytoplasmic; sequence KDVGPERNYPYAMRKPYSTAGVSMAKSYKAPRTETAKMYAVDTRV. Residues 233 to 235 carry the Interaction with TJP1 motif; the sequence is TRV.

Belongs to the claudin family. Can form heteropolymeric tight junction strands with other claudins. Interacts with CLDN19. Cannot form tight junction strands on its own. Interacts (via PDZ-binding motif TRV) with TJP1 (via PDZ domain). Expressed in the corticomedullary axis of the TAL, specifically in the cortex and the outer stripe of outer medulla (OSOM) zone (at protein level).

The protein localises to the cell junction. The protein resides in the tight junction. It localises to the cell membrane. It carries out the reaction Mg(2+)(in) = Mg(2+)(out). The catalysed reaction is Ca(2+)(in) = Ca(2+)(out). The enzyme catalyses Na(+)(in) = Na(+)(out). It catalyses the reaction K(+)(in) = K(+)(out). It carries out the reaction Rb(+)(in) = Rb(+)(out). The catalysed reaction is Cs(+)(in) = Cs(+)(out). The enzyme catalyses Li(+)(in) = Li(+)(out). Functionally, forms paracellular channels: coassembles with CLDN19 into tight junction strands with cation-selective channels through the strands, conveying epithelial permeability in a process known as paracellular tight junction permeability. Involved in the maintenance of ion gradients along the nephron. In the thick ascending limb (TAL) of Henle's loop, facilitates sodium paracellular permeability from the interstitial compartment to the lumen, contributing to the lumen-positive transepithelial potential that drives paracellular magnesium and calcium reabsorption. The protein is Claudin-16 of Mus musculus (Mouse).